The primary structure comprises 172 residues: Centrin-2 (172 aa).

The tract at residues methionine 1–lysine 30 is disordered. An N-acetylalanine modification is found at alanine 2. A required for self-assembly region spans residues alanine 2–leucine 25. Position 20 is a phosphoserine (serine 20). A Glycyl lysine isopeptide (Lys-Gly) (interchain with G-Cter in SUMO2) cross-link involves residue lysine 22. The residue at position 26 (threonine 26) is a Phosphothreonine. 4 consecutive EF-hand domains span residues glutamate 28–glutamate 63, proline 64–glutamate 99, aspartate 101–asparagine 136, and leucine 137–tyrosine 172. The Ca(2+) site is built by aspartate 41, aspartate 43, threonine 45, threonine 47, and glutamate 52. Positions 150, 152, 154, 156, and 161 each coordinate Ca(2+).

Belongs to the centrin family. In terms of assembly, monomer. Homooligomer. Interacts with SFI1. Interacts with CCP110. Component of the XPC complex composed of XPC, RAD23B and CETN2. Component of the nuclear pore complex (NPC)-associated TREX-2 complex (transcription and export complex 2), composed of at least GANP, 2 copies of ENY2, PCID2, SEM1/DSS1, and either centrin CETN2 or centrin CETN3. The TREX-2 complex also associates with ALYREF/ALY and with the nucleoporin NUP153. Interacts with USP49. Forms a microtubule-associated complex with POC5, POC1B and FAM161A. Interacts with CCDC15.

The protein localises to the cytoplasm. It localises to the cytoskeleton. The protein resides in the microtubule organizing center. It is found in the centrosome. Its subcellular location is the centriole. The protein localises to the nucleus envelope. It localises to the nucleus. The protein resides in the nuclear pore complex. Functionally, plays a fundamental role in microtubule organizing center structure and function. Required for centriole duplication and correct spindle formation. Has a role in regulating cytokinesis and genome stability via cooperation with CALM1 and CCP110. In terms of biological role, involved in global genome nucleotide excision repair (GG-NER) by acting as component of the XPC complex. Cooperatively with RAD23B appears to stabilize XPC. In vitro, stimulates DNA binding of the XPC:RAD23B dimer. Its function is as follows. The XPC complex is proposed to represent the first factor bound at the sites of DNA damage and together with other core recognition factors, XPA, RPA and the TFIIH complex, is part of the pre-incision (or initial recognition) complex. The XPC complex recognizes a wide spectrum of damaged DNA characterized by distortions of the DNA helix such as single-stranded loops, mismatched bubbles or single-stranded overhangs. The orientation of XPC complex binding appears to be crucial for inducing a productive NER. XPC complex is proposed to recognize and to interact with unpaired bases on the undamaged DNA strand which is followed by recruitment of the TFIIH complex and subsequent scanning for lesions in the opposite strand in a 5'-to-3' direction by the NER machinery. Cyclobutane pyrimidine dimers (CPDs) which are formed upon UV-induced DNA damage esacpe detection by the XPC complex due to a low degree of structural perurbation. Instead they are detected by the UV-DDB complex which in turn recruits and cooperates with the XPC complex in the respective DNA repair. As a component of the TREX-2 complex, involved in the export of mRNAs to the cytoplasm through the nuclear pores. The protein is Centrin-2 (CETN2) of Homo sapiens (Human).